The sequence spans 162 residues: NADH-quinone oxidoreductase subunit I (162 aa).

2 4Fe-4S ferredoxin-type domains span residues 52–82 and 93–122; these read LRRYPNGEERCIACKLCEAVCPAQAITIEAG and VRYDIDMVKCIYCGLCQEACPVDAIVEGPN. The [4Fe-4S] cluster site is built by Cys-62, Cys-65, Cys-68, Cys-72, Cys-102, Cys-105, Cys-108, and Cys-112.

It belongs to the complex I 23 kDa subunit family. As to quaternary structure, NDH-1 is composed of 14 different subunits. Subunits NuoA, H, J, K, L, M, N constitute the membrane sector of the complex. Requires [4Fe-4S] cluster as cofactor.

Its subcellular location is the cell inner membrane. The enzyme catalyses a quinone + NADH + 5 H(+)(in) = a quinol + NAD(+) + 4 H(+)(out). Its function is as follows. NDH-1 shuttles electrons from NADH, via FMN and iron-sulfur (Fe-S) centers, to quinones in the respiratory chain. The immediate electron acceptor for the enzyme in this species is believed to be ubiquinone. Couples the redox reaction to proton translocation (for every two electrons transferred, four hydrogen ions are translocated across the cytoplasmic membrane), and thus conserves the redox energy in a proton gradient. The protein is NADH-quinone oxidoreductase subunit I of Bradyrhizobium sp. (strain BTAi1 / ATCC BAA-1182).